A 142-amino-acid polypeptide reads, in one-letter code: Regulator of ribonuclease activity B (142 aa).

The tract at residues 117–142 is disordered; sequence PNADEDEYGEDGEFFDDEFADDDEKR.

This sequence belongs to the RraB family. In terms of assembly, interacts with the C-terminal region of Rne.

Its subcellular location is the cytoplasm. Functionally, globally modulates RNA abundance by binding to RNase E (Rne) and regulating its endonucleolytic activity. Can modulate Rne action in a substrate-dependent manner by altering the composition of the degradosome. The polypeptide is Regulator of ribonuclease activity B (Actinobacillus succinogenes (strain ATCC 55618 / DSM 22257 / CCUG 43843 / 130Z)).